A 122-amino-acid polypeptide reads, in one-letter code: Large ribosomal subunit protein uL14c (122 aa).

Belongs to the universal ribosomal protein uL14 family. In terms of assembly, part of the 50S ribosomal subunit.

The protein localises to the plastid. The protein resides in the chloroplast. Binds to 23S rRNA. The protein is Large ribosomal subunit protein uL14c of Coffea arabica (Arabian coffee).